The chain runs to 873 residues: Alanine--tRNA ligase (873 aa).

Zn(2+) is bound by residues H563, H567, C664, and H668.

It belongs to the class-II aminoacyl-tRNA synthetase family. The cofactor is Zn(2+).

It localises to the cytoplasm. The enzyme catalyses tRNA(Ala) + L-alanine + ATP = L-alanyl-tRNA(Ala) + AMP + diphosphate. Functionally, catalyzes the attachment of alanine to tRNA(Ala) in a two-step reaction: alanine is first activated by ATP to form Ala-AMP and then transferred to the acceptor end of tRNA(Ala). Also edits incorrectly charged Ser-tRNA(Ala) and Gly-tRNA(Ala) via its editing domain. The polypeptide is Alanine--tRNA ligase (Aromatoleum aromaticum (strain DSM 19018 / LMG 30748 / EbN1) (Azoarcus sp. (strain EbN1))).